Reading from the N-terminus, the 80-residue chain is U-Asilidin(1)-Dg12 (80 aa).

Positions 1 to 24 are cleaved as a signal peptide; sequence MARLLVVSVGVFLAVIMLSSETMS. The propeptide occupies 25 to 46; the sequence is LPAGENLPALTLFEAQNQLIGL. 3 cysteine pairs are disulfide-bonded: Cys53–Cys67, Cys60–Cys71, and Cys66–Cys78.

This sequence belongs to the asilidin-1 family. In terms of tissue distribution, expressed by the venom gland.

The protein localises to the secreted. Neurotoxin that may modulate ions channels (other than those tested). In vivo, induces neurotoxic effects when injected into insects (tested on L.cuprina and A.domesticus). This Dolopus genitalis (Giant Australian assassin fly) protein is U-Asilidin(1)-Dg12.